The following is a 398-amino-acid chain: Dual-specificity RNA methyltransferase RlmN (398 aa).

Glu119 functions as the Proton acceptor in the catalytic mechanism. Positions 125–364 (EADRATLCVS…TIVRKTRGDD (240 aa)) constitute a Radical SAM core domain. Residues Cys132 and Cys369 are joined by a disulfide bond. 3 residues coordinate [4Fe-4S] cluster: Cys139, Cys143, and Cys146. S-adenosyl-L-methionine is bound by residues 193–194 (GE), Ser225, 247–249 (SLH), and Asn326. Cys369 serves as the catalytic S-methylcysteine intermediate.

The protein belongs to the radical SAM superfamily. RlmN family. [4Fe-4S] cluster serves as cofactor.

The protein resides in the cytoplasm. The enzyme catalyses adenosine(2503) in 23S rRNA + 2 reduced [2Fe-2S]-[ferredoxin] + 2 S-adenosyl-L-methionine = 2-methyladenosine(2503) in 23S rRNA + 5'-deoxyadenosine + L-methionine + 2 oxidized [2Fe-2S]-[ferredoxin] + S-adenosyl-L-homocysteine. It catalyses the reaction adenosine(37) in tRNA + 2 reduced [2Fe-2S]-[ferredoxin] + 2 S-adenosyl-L-methionine = 2-methyladenosine(37) in tRNA + 5'-deoxyadenosine + L-methionine + 2 oxidized [2Fe-2S]-[ferredoxin] + S-adenosyl-L-homocysteine. Functionally, specifically methylates position 2 of adenine 2503 in 23S rRNA and position 2 of adenine 37 in tRNAs. m2A2503 modification seems to play a crucial role in the proofreading step occurring at the peptidyl transferase center and thus would serve to optimize ribosomal fidelity. The polypeptide is Dual-specificity RNA methyltransferase RlmN (Yersinia pseudotuberculosis serotype IB (strain PB1/+)).